Reading from the N-terminus, the 345-residue chain is Opioid-binding protein/cell adhesion molecule (345 aa).

Residues Met1–Thr27 form the signal peptide. Ig-like C2-type domains are found at residues Pro39–Ser126, Pro136–Thr219, and Pro223–Thr310. N-linked (GlcNAc...) asparagine glycosylation is found at Asn44, Asn70, and Asn140. Cys57 and Cys115 form a disulfide bridge. 2 disulfides stabilise this stretch: Cys157-Cys202 and Cys244-Cys296. N-linked (GlcNAc...) asparagine glycosylation is found at Asn285, Asn293, and Asn306. Asn322 carries the GPI-anchor amidated asparagine lipid modification. A propeptide spans Ser323 to Phe345 (removed in mature form).

This sequence belongs to the immunoglobulin superfamily. IgLON family.

The protein resides in the cell membrane. Binds opioids in the presence of acidic lipids; probably involved in cell contact. This Homo sapiens (Human) protein is Opioid-binding protein/cell adhesion molecule (OPCML).